Here is a 122-residue protein sequence, read N- to C-terminus: Large ribosomal subunit protein bL12 (122 aa).

This sequence belongs to the bacterial ribosomal protein bL12 family. Homodimer. Part of the ribosomal stalk of the 50S ribosomal subunit. Forms a multimeric L10(L12)X complex, where L10 forms an elongated spine to which 2 to 4 L12 dimers bind in a sequential fashion. Binds GTP-bound translation factors.

Functionally, forms part of the ribosomal stalk which helps the ribosome interact with GTP-bound translation factors. Is thus essential for accurate translation. The protein is Large ribosomal subunit protein bL12 of Buchnera aphidicola subsp. Baizongia pistaciae (strain Bp).